We begin with the raw amino-acid sequence, 427 residues long: Enolase (427 aa).

Residue glutamine 163 participates in (2R)-2-phosphoglycerate binding. Glutamate 205 (proton donor) is an active-site residue. Residues aspartate 242, glutamate 285, and aspartate 312 each coordinate Mg(2+). Lysine 337, arginine 366, serine 367, and lysine 388 together coordinate (2R)-2-phosphoglycerate. Lysine 337 acts as the Proton acceptor in catalysis.

It belongs to the enolase family. The cofactor is Mg(2+).

The protein resides in the cytoplasm. It is found in the secreted. It localises to the cell surface. It carries out the reaction (2R)-2-phosphoglycerate = phosphoenolpyruvate + H2O. It functions in the pathway carbohydrate degradation; glycolysis; pyruvate from D-glyceraldehyde 3-phosphate: step 4/5. Its function is as follows. Catalyzes the reversible conversion of 2-phosphoglycerate (2-PG) into phosphoenolpyruvate (PEP). It is essential for the degradation of carbohydrates via glycolysis. The chain is Enolase from Paraburkholderia phytofirmans (strain DSM 17436 / LMG 22146 / PsJN) (Burkholderia phytofirmans).